A 323-amino-acid polypeptide reads, in one-letter code: Fructose-1,6-bisphosphatase class 1 (323 aa).

Mg(2+) contacts are provided by glutamate 84, aspartate 103, leucine 105, and aspartate 106. Residues 106 to 109 (DGSS), asparagine 198, and lysine 264 contribute to the substrate site. Residue glutamate 270 coordinates Mg(2+).

This sequence belongs to the FBPase class 1 family. Homotetramer. Mg(2+) is required as a cofactor.

It localises to the cytoplasm. The catalysed reaction is beta-D-fructose 1,6-bisphosphate + H2O = beta-D-fructose 6-phosphate + phosphate. Its pathway is carbohydrate biosynthesis; gluconeogenesis. The protein is Fructose-1,6-bisphosphatase class 1 of Pseudoalteromonas atlantica (strain T6c / ATCC BAA-1087).